We begin with the raw amino-acid sequence, 692 residues long: Elongation factor G (692 aa).

Residues Glu-8–Leu-283 form the tr-type G domain. GTP is bound by residues Ala-17–Thr-24, Asp-81–His-85, and Asn-135–Asp-138.

Belongs to the TRAFAC class translation factor GTPase superfamily. Classic translation factor GTPase family. EF-G/EF-2 subfamily.

It is found in the cytoplasm. Functionally, catalyzes the GTP-dependent ribosomal translocation step during translation elongation. During this step, the ribosome changes from the pre-translocational (PRE) to the post-translocational (POST) state as the newly formed A-site-bound peptidyl-tRNA and P-site-bound deacylated tRNA move to the P and E sites, respectively. Catalyzes the coordinated movement of the two tRNA molecules, the mRNA and conformational changes in the ribosome. This is Elongation factor G from Caulobacter sp. (strain K31).